The primary structure comprises 316 residues: Acetaldehyde dehydrogenase (316 aa).

NAD(+) is bound at residue 11–14 (SGNI). Cys131 (acyl-thioester intermediate) is an active-site residue. Residues 162–170 (SAGPGTRAN) and Asn289 each bind NAD(+).

This sequence belongs to the acetaldehyde dehydrogenase family. Interacts with MhpE.

It catalyses the reaction acetaldehyde + NAD(+) + CoA = acetyl-CoA + NADH + H(+). The protein operates within aromatic compound metabolism; 3-phenylpropanoate degradation. In terms of biological role, catalyzes the conversion of acetaldehyde to acetyl-CoA, using NAD(+) and coenzyme A. Is the final enzyme in the meta-cleavage pathway for the degradation of aromatic compounds. The polypeptide is Acetaldehyde dehydrogenase (Shigella sonnei (strain Ss046)).